We begin with the raw amino-acid sequence, 96 residues long: uncharacterized protein (96 aa).

A run of 2 helical transmembrane segments spans residues 27-47 (LAFR…ALLI) and 50-70 (LSGV…SIVF).

The protein localises to the cell membrane. This is an uncharacterized protein from Haemophilus influenzae (strain ATCC 51907 / DSM 11121 / KW20 / Rd).